Consider the following 1408-residue polypeptide: Protein patched homolog 1 (1408 aa).

The tract at residues 1–20 is disordered; that stretch reads MLTLLEPPGAKRSPTVGNYN. Residues 1–136 lie on the Cytoplasmic side of the membrane; it reads MLTLLEPPGA…GNTVHRNAWS (136 aa). The helical transmembrane segment at 137 to 157 threads the bilayer; it reads IILAVSMIFAVCCYGLQYVHI. Residues 158-649 are Extracellular-facing; that stretch reads ETDIVKLWVA…STSIADMLEE (492 aa). The segment at 455-479 is disordered; it reads STAPIPTTTTLSPEEARAAEEKEKK. Basic and acidic residues predominate over residues 468–479; it reads EEARAAEEKEKK. The N-linked (GlcNAc...) asparagine glycan is linked to Asn-599. Residues 650-670 form a helical membrane-spanning segment; it reads FCQFNYTIILAGYALMLAYAI. The region spanning 654 to 816 is the SSD domain; that stretch reads NYTIILAGYA…LTIYPAIISI (163 aa). At 671-686 the chain is on the cytoplasmic side; it reads VTQARFDNCLPATESS. A helical transmembrane segment spans residues 687 to 707; that stretch reads MGLALAGVLVVTFASVAGLGL. The Extracellular segment spans residues 708-709; it reads AT. A helical membrane pass occupies residues 710-730; it reads WFGIEFNAATTQIVPFLTLGI. The Cytoplasmic segment spans residues 731-765; the sequence is GVDNMFMLLHNYRDVVKLAGGHAEMAILMRETGMS. Residues 766–786 form a helical membrane-spanning segment; that stretch reads ILCTSINNILSFLTGTLLPIP. Over 787–795 the chain is Extracellular; sequence ALRSFCAQS. A helical transmembrane segment spans residues 796 to 816; that stretch reads SILLTFNFIAILTIYPAIISI. Over 817–901 the chain is Cytoplasmic; sequence DLRRKKAQRR…YYYIPFISKP (85 aa). A helical transmembrane segment spans residues 902–922; the sequence is ASKVAIIVGCCALLGASFIGM. Topologically, residues 923–1175 are extracellular; the sequence is RQSTLGLELG…QGIAFTFWEQ (253 aa). Residues Asn-1026 and Asn-1036 are each glycosylated (N-linked (GlcNAc...) asparagine). A helical transmembrane segment spans residues 1176-1196; the sequence is YLFLTGNLMQAISIITISVFC. Over 1197–1217 the chain is Cytoplasmic; that stretch reads VISVLLFNPWAALMVVCILGI. The next 2 membrane-spanning stretches (helical) occupy residues 1218–1238 and 1239–1259; these read MTCE…PVSA and VTLI…VVSF. Residues 1260–1276 are Extracellular-facing; that stretch reads LTALGTRSQRTSSAVDR. Residues 1277–1297 traverse the membrane as a helical segment; sequence VFVPVIHGSFSTLLGILMLGF. The Cytoplasmic portion of the chain corresponds to 1298–1305; sequence SEFEFVVK. A helical membrane pass occupies residues 1306–1326; it reads YFFIVMTALICIGIINGLILL. Residues 1327-1408 lie on the Extracellular side of the membrane; that stretch reads PVLLSWFGPR…GNNTRRLPAV (82 aa). The interval 1342–1408 is disordered; it reads TGGKTTLTLP…GNNTRRLPAV (67 aa). The segment covering 1387 to 1408 has biased composition (low complexity); sequence TTRTSGGNRGTVGNNTRRLPAV.

This sequence belongs to the patched family. Germ line and its progenitors.

It localises to the membrane. Functionally, required but not essential for cytokinesis of mitotically proliferating germ cells. This Caenorhabditis elegans protein is Protein patched homolog 1 (ptc-1).